The chain runs to 484 residues: tRNA sulfurtransferase (484 aa).

Residues 63-167 form the THUMP domain; it reads QAFGERLACI…RDKLYMVTKR (105 aa). ATP-binding positions include 185 to 186, lysine 267, glycine 289, and glutamine 298; that span reads LI. Residues cysteine 346 and cysteine 458 are joined by a disulfide bond. One can recognise a Rhodanese domain in the interval 406 to 484; it reads IETNEVVIDI…GYTNVKVYRP (79 aa). Catalysis depends on cysteine 458, which acts as the Cysteine persulfide intermediate.

It belongs to the ThiI family.

It is found in the cytoplasm. The enzyme catalyses [ThiI sulfur-carrier protein]-S-sulfanyl-L-cysteine + a uridine in tRNA + 2 reduced [2Fe-2S]-[ferredoxin] + ATP + H(+) = [ThiI sulfur-carrier protein]-L-cysteine + a 4-thiouridine in tRNA + 2 oxidized [2Fe-2S]-[ferredoxin] + AMP + diphosphate. It carries out the reaction [ThiS sulfur-carrier protein]-C-terminal Gly-Gly-AMP + S-sulfanyl-L-cysteinyl-[cysteine desulfurase] + AH2 = [ThiS sulfur-carrier protein]-C-terminal-Gly-aminoethanethioate + L-cysteinyl-[cysteine desulfurase] + A + AMP + 2 H(+). It participates in cofactor biosynthesis; thiamine diphosphate biosynthesis. Catalyzes the ATP-dependent transfer of a sulfur to tRNA to produce 4-thiouridine in position 8 of tRNAs, which functions as a near-UV photosensor. Also catalyzes the transfer of sulfur to the sulfur carrier protein ThiS, forming ThiS-thiocarboxylate. This is a step in the synthesis of thiazole, in the thiamine biosynthesis pathway. The sulfur is donated as persulfide by IscS. This Shewanella putrefaciens (strain CN-32 / ATCC BAA-453) protein is tRNA sulfurtransferase.